The chain runs to 87 residues: Small ribosomal subunit protein bS16 (87 aa).

This sequence belongs to the bacterial ribosomal protein bS16 family.

In Buchnera aphidicola subsp. Baizongia pistaciae (strain Bp), this protein is Small ribosomal subunit protein bS16.